A 1742-amino-acid chain; its full sequence is Meiosis regulator and mRNA stability factor 1 (1742 aa).

Serine 65 carries the phosphoserine modification. The region spanning 351-488 (IGVFWDIENC…ALLHHANELI (138 aa)) is the NYN domain. Disordered stretches follow at residues 620-642 (PSSAKAAPGKGSQANSGSATRNA) and 655-721 (SKTG…KEKE). The span at 631–642 (SQANSGSATRNA) shows a compositional bias: polar residues. Residues 673–689 (APPHRSSSAAAPAPKAP) are compositionally biased toward low complexity. A Phosphotyrosine modification is found at tyrosine 696. Phosphoserine is present on serine 757. The region spanning 788-867 (VDVQISNLDY…KKILVSLATG (80 aa)) is the RRM domain. 2 HTH OST-type domains span residues 872–946 (SLSL…SPLG) and 1000–1077 (SLKT…HNKP). Phosphoserine occurs at positions 1089 and 1091. 6 HTH OST-type domains span residues 1097 to 1171 (QLIQ…LTHR), 1173 to 1247 (QVKR…CIPR), 1257 to 1332 (RTKQ…TEVE), 1333 to 1408 (RFKA…INRK), 1409 to 1484 (SLRA…CVKL), and 1486 to 1560 (SLYL…LKND). Serine 1571 bears the Phosphoserine mark. The segment at 1678–1729 (IRNENLPPDPSSPGVSAAVPAPPSPSSETPESLLSKDPTESPAKKQPKNRVK) is disordered. Positions 1703–1712 (SSETPESLLS) are enriched in low complexity.

As to quaternary structure, interacts with LIMK2.

The protein localises to the peroxisome. Essential regulator of oogenesis required for female meiotic progression to repress transposable elements and preventing their mobilization, which is essential for the germline integrity. Probably acts via some RNA metabolic process, equivalent to the piRNA system in males, which mediates the repression of transposable elements during meiosis by forming complexes composed of RNAs and governs the methylation and subsequent repression of transposons. Also required to protect from DNA double-strand breaks. The sequence is that of Meiosis regulator and mRNA stability factor 1 from Bos taurus (Bovine).